Consider the following 345-residue polypeptide: Ribonucleoside-diphosphate reductase small chain 2 (345 aa).

An N-acetylmethionine modification is found at M1. The active site involves Y131. A phosphoserine mark is found at S169 and S332. T334 carries the phosphothreonine modification. At S336 the chain carries Phosphoserine. A Glycyl lysine isopeptide (Lys-Gly) (interchain with G-Cter in ubiquitin) cross-link involves residue K337.

It belongs to the ribonucleoside diphosphate reductase small chain family. As to quaternary structure, heterotetramer of two large (R1) and two small (R2) subunits. S.cerevisiae has two different R1 subunits (RNR1 and RNR3) and two different R2 subunits (RNR2 and RNR4). The functional form of the small subunits is a RNR2-RNR4 heterodimer, where RNR2 provides the iron-radical center and RNR4 is required for proper folding of RNR2 and assembly with the large subunits. Under normal growth conditions, the active form of the large subunits is a homodimer of the constitutively expressed RNR1. In damaged cells or cells arrested for DNA synthesis, the reductase consists of multiple species because of the association of the small subunits (RNR2-RNR4) with either the RNR1 homodimer or a heterodimer of RNR1 and the damage-inducible RNR3. Interacts with DIF1.

The protein localises to the nucleus. It catalyses the reaction a 2'-deoxyribonucleoside 5'-diphosphate + [thioredoxin]-disulfide + H2O = a ribonucleoside 5'-diphosphate + [thioredoxin]-dithiol. Functionally, provides the precursors necessary for DNA synthesis. Catalyzes the biosynthesis of deoxyribonucleotides from the corresponding ribonucleotides. RNR4 is required for proper folding of RNR2 and assembly with the large subunits. This Saccharomyces cerevisiae (strain ATCC 204508 / S288c) (Baker's yeast) protein is Ribonucleoside-diphosphate reductase small chain 2 (RNR4).